The chain runs to 1116 residues: MAP kinase kinase kinase mkh1 (1116 aa).

Disordered stretches follow at residues 510–601 (LKMP…SNSL) and 618–647 (ALDESDLSGDPFWAIQPKQSSSQVPKENHH). Residues 515-531 (NSGSSAPQSPSSNTSAS) are compositionally biased toward low complexity. The span at 553–569 (LRRKNTLTRRPSIRHAR) shows a compositional bias: basic residues. Over residues 588–601 (SFDPKASSKSSNSL) the composition is skewed to low complexity. Residues 634 to 647 (PKQSSSQVPKENHH) are compositionally biased toward polar residues. Residues 825–1094 (WMKGELIGNG…AEELLNHPFM (270 aa)) enclose the Protein kinase domain. ATP is bound by residues 831-839 (IGNGTYGKV) and Lys-854. Asp-955 acts as the Proton acceptor in catalysis.

The protein belongs to the protein kinase superfamily. STE Ser/Thr protein kinase family. MAP kinase kinase kinase subfamily.

It carries out the reaction L-seryl-[protein] + ATP = O-phospho-L-seryl-[protein] + ADP + H(+). The catalysed reaction is L-threonyl-[protein] + ATP = O-phospho-L-threonyl-[protein] + ADP + H(+). Functionally, may regulate cell morphology, cell wall integrity, salt resistance, cell cycle reentry from stationary-phase arrest, and filamentous growth in response to stress. Activates the MAP kinase kinase skh1/pek1 by phosphorylation. In Schizosaccharomyces pombe (strain 972 / ATCC 24843) (Fission yeast), this protein is MAP kinase kinase kinase mkh1 (mkh1).